Reading from the N-terminus, the 690-residue chain is Eukaryotic translation initiation factor 3 subunit B (690 aa).

Residues 1–37 (MAKKKSEEQSSADANDSDYQEEPNFEDPPGFVDNISD) form a disordered region. The span at 15-25 (NDSDYQEEPNF) shows a compositional bias: acidic residues. In terms of domain architecture, RRM spans 57-141 (SVVVVDNIPK…HTFAVNLFTD (85 aa)). WD repeat units follow at residues 207–246 (TRERFTDTFVKWSPLGTYVVTFHKPGVAIWGGSSFQKIQK), 293–331 (DGMSVLSMFRWSHDDKFVARMGENSIHIYETPSFYLLDL), 334–369 (IKIPGIRGFSWSPTDNVIAYWVEEQNQIPARVTLME), 442–484 (EIRE…KPSL), and 530–575 (PDHF…IKRT). The stretch at 595–645 (EEKQKEIKKNLKKYYAAFEQKDRLRLTRASKELLEKRSQLRETFMEYRNKR) forms a coiled coil.

The protein belongs to the eIF-3 subunit B family. As to quaternary structure, component of the eukaryotic translation initiation factor 3 (eIF-3) complex. The eIF-3 complex interacts with pix. Interacts with mxt.

Its subcellular location is the cytoplasm. In terms of biological role, RNA-binding component of the eukaryotic translation initiation factor 3 (eIF-3) complex, which is involved in protein synthesis of a specialized repertoire of mRNAs and, together with other initiation factors, stimulates binding of mRNA and methionyl-tRNAi to the 40S ribosome. The eIF-3 complex specifically targets and initiates translation of a subset of mRNAs involved in cell proliferation. This Drosophila sechellia (Fruit fly) protein is Eukaryotic translation initiation factor 3 subunit B.